We begin with the raw amino-acid sequence, 96 residues long: Transmembrane protein PMIS2 (96 aa).

2 helical membrane passes run 31–51 (VMLA…AIYF) and 76–96 (WFNM…VLVL).

This sequence belongs to the CD225/Dispanin family. Specifically expressed in testis.

It localises to the membrane. Its function is as follows. May play a role in spermatozoa mobility. In Mus musculus (Mouse), this protein is Transmembrane protein PMIS2.